Consider the following 629-residue polypeptide: uncharacterized protein (629 aa).

An ABC transporter 1 domain is found at 4–255 (LKAENLYKTY…KRAEREAQAE (252 aa)). Residue 36–43 (GPNGTGKS) participates in ATP binding. A disordered region spans residues 284-304 (KARIDRVETLKEQTGPQSSGS). The segment covering 285–294 (ARIDRVETLK) has biased composition (basic and acidic residues). Over residues 295–304 (EQTGPQSSGS) the composition is skewed to polar residues. The ABC transporter 2 domain maps to 319–537 (IEAENVMIAY…EESKAKKAAP (219 aa)). ATP is bound at residue 351-358 (GPNGIGKT). The disordered stretch occupies residues 530 to 555 (SKAKKAAPKPAAEEKTAEAEPKKKRK). The segment covering 540–550 (AAEEKTAEAEP) has biased composition (basic and acidic residues). Residues 560-629 (KDQLEWDGIE…LSLMIEELES (70 aa)) are a coiled coil.

Belongs to the ABC transporter superfamily.

This is an uncharacterized protein from Bacillus subtilis (strain 168).